The chain runs to 32 residues: MAKEIFSIAAVFWILIPIGLVGGALLLKFQGD.

A helical transmembrane segment spans residues 9-27; the sequence is AAVFWILIPIGLVGGALLL.

It belongs to the PetM family. As to quaternary structure, the 4 large subunits of the cytochrome b6-f complex are cytochrome b6, subunit IV (17 kDa polypeptide, PetD), cytochrome f and the Rieske protein, while the 4 small subunits are PetG, PetL, PetM and PetN. The complex functions as a dimer.

The protein localises to the cellular thylakoid membrane. In terms of biological role, component of the cytochrome b6-f complex, which mediates electron transfer between photosystem II (PSII) and photosystem I (PSI), cyclic electron flow around PSI, and state transitions. The sequence is that of Cytochrome b6-f complex subunit 7 from Prochlorococcus marinus (strain MIT 9515).